We begin with the raw amino-acid sequence, 262 residues long: Thrombin-like enzyme calobin-1 (262 aa).

The first 18 residues, 1 to 18, serve as a signal peptide directing secretion; it reads MVLISVLANLLILQLSYA. Residues 19–24 constitute a propeptide that is removed on maturation; it reads QKSSEL. One can recognise a Peptidase S1 domain in the interval 25–253; the sequence is VIGGDECNIN…HLDWIQSIIA (229 aa). Intrachain disulfides connect cysteine 31–cysteine 165, cysteine 52–cysteine 68, cysteine 100–cysteine 260, cysteine 144–cysteine 214, cysteine 176–cysteine 193, and cysteine 204–cysteine 229. The Charge relay system role is filled by histidine 67. A glycan (N-linked (GlcNAc...) asparagine) is linked at asparagine 105. Residue aspartate 112 is the Charge relay system of the active site. Serine 208 acts as the Charge relay system in catalysis.

It belongs to the peptidase S1 family. Snake venom subfamily. As to quaternary structure, monomer. Post-translationally, N-glycosylated. In terms of tissue distribution, expressed by the venom gland.

The protein localises to the secreted. With respect to regulation, strongly inhibited by PMSF, and moderately by benzamidine and soybean trypsin inhibitor. Functionally, thrombin-like snake venom serine protease. Has a coagulant activity. Acts on alpha-chains of fibrinogen (FGA) generating fibrinopeptide A. The chain is Thrombin-like enzyme calobin-1 from Gloydius ussuriensis (Ussuri mamushi).